We begin with the raw amino-acid sequence, 160 residues long: SsrA-binding protein (160 aa).

It belongs to the SmpB family.

Its subcellular location is the cytoplasm. Required for rescue of stalled ribosomes mediated by trans-translation. Binds to transfer-messenger RNA (tmRNA), required for stable association of tmRNA with ribosomes. tmRNA and SmpB together mimic tRNA shape, replacing the anticodon stem-loop with SmpB. tmRNA is encoded by the ssrA gene; the 2 termini fold to resemble tRNA(Ala) and it encodes a 'tag peptide', a short internal open reading frame. During trans-translation Ala-aminoacylated tmRNA acts like a tRNA, entering the A-site of stalled ribosomes, displacing the stalled mRNA. The ribosome then switches to translate the ORF on the tmRNA; the nascent peptide is terminated with the 'tag peptide' encoded by the tmRNA and targeted for degradation. The ribosome is freed to recommence translation, which seems to be the essential function of trans-translation. The protein is SsrA-binding protein of Mycobacterium bovis (strain ATCC BAA-935 / AF2122/97).